An 887-amino-acid polypeptide reads, in one-letter code: Phosphatidylinositol 3-kinase catalytic subunit type 3 (887 aa).

In terms of domain architecture, C2 PI3K-type spans 35 to 184 (YKAVLEDPML…LAKLTKAHRQ (150 aa)). The segment at 150–170 (EADGSEPTKTPGRTSSTLSED) is disordered. Positions 156 to 170 (PTKTPGRTSSTLSED) are enriched in polar residues. Threonine 163 is modified (phosphothreonine; by AMPK). Phosphoserine; by AMPK is present on serine 165. 3 positions are modified to phosphoserine: serine 244, serine 261, and serine 282. One can recognise a PIK helical domain in the interval 282 to 520 (SDHGLKPNAA…PKTHEMYLNV (239 aa)). Disordered stretches follow at residues 416-435 (EPTK…NSGI) and 446-468 (ITSP…SSDG). Residues 423-435 (QGSVSESVSNSGI) are compositionally biased toward low complexity. Residues 449–459 (PLPPVSSPPPA) are compositionally biased toward pro residues. Positions 605 to 871 (IPETATLFKS…LIDESVHALF (267 aa)) constitute a PI3K/PI4K catalytic domain. A G-loop region spans residues 611–617 (LFKSALM). The catalytic loop stretch occupies residues 740–748 (GVGDRHLDN). The activation loop stretch occupies residues 759-780 (HIDFGYILGRDPKPLPPPMKLN).

This sequence belongs to the PI3/PI4-kinase family. Component of the PI3K (PI3KC3/PI3K-III/class III phosphatidylinositol 3-kinase) complex the core of which is composed of the catalytic subunit PIK3C3, the regulatory subunit PIK3R4 and BECN1 associating with additional regulatory/auxiliary subunits to form alternative complex forms. Alternative complex forms containing a fourth regulatory subunit in a mutually exclusive manner are: the PI3K complex I (PI3KC3-C1) containing ATG14, and the PI3K complex II (PI3KC3-C2) containing UVRAG. PI3KC3-C1 displays a V-shaped architecture with PIK3R4 serving as a bridge between PIK3C3 and the ATG14:BECN1 subcomplex. Both, PI3KC3-C1 and PI3KC3-C2, can associate with further regulatory subunits such as RUBCN, SH3GLB1/Bif-1 and AMBRA1. PI3KC3-C1 probably associates with PIK3CB. Interacts with RAB7A in the presence of PIK3R4. Interacts with AMBRA1. Interacts with BECN1P1/BECN2. Interacts with SLAMF1. May be a component of a complex composed of RAB5A (in GDP-bound form), DYN2 and PIK3C3. Interacts with NCKAP1L. Interacts with ATG14; this interaction is increased in the absence of TMEM39A. Interacts with STEEP1; the interaction is STING1-dependent and required for trafficking of STING1 from the endoplasmic reticulum. Interacts with YWHAG. Interacts with ARMC3. Mn(2+) is required as a cofactor. In terms of processing, ubiquitinated via 'Lys-29'- and 'Lys-48'-linked ubiquitination by UBE3C, promoting its degradation. Deubiquitination by ZRANB1/TRABID promotes its stabilization, leading to autophagosome maturation.

It localises to the midbody. Its subcellular location is the late endosome. The protein localises to the cytoplasmic vesicle. The protein resides in the autophagosome. The catalysed reaction is a 1,2-diacyl-sn-glycero-3-phospho-(1D-myo-inositol) + ATP = a 1,2-diacyl-sn-glycero-3-phospho-(1D-myo-inositol-3-phosphate) + ADP + H(+). In terms of biological role, catalytic subunit of the PI3K complex that mediates formation of phosphatidylinositol 3-phosphate; different complex forms are believed to play a role in multiple membrane trafficking pathways: PI3KC3-C1 is involved in initiation of autophagosomes and PI3KC3-C2 in maturation of autophagosomes and endocytosis. As part of PI3KC3-C1, promotes endoplasmic reticulum membrane curvature formation prior to vesicle budding. Involved in regulation of degradative endocytic trafficking and required for the abscission step in cytokinesis, probably in the context of PI3KC3-C2. Involved in the transport of lysosomal enzyme precursors to lysosomes. Required for transport from early to late endosomes. This chain is Phosphatidylinositol 3-kinase catalytic subunit type 3, found in Sus scrofa (Pig).